A 322-amino-acid chain; its full sequence is Hydrolase C26A3.11 (322 aa).

The region spanning 44–290 (FRIGLVQLAN…PSIVYADIDP (247 aa)) is the CN hydrolase domain. Glu83 serves as the catalytic Proton acceptor. Residue Lys154 is the Proton donor of the active site. The active-site Nucleophile is the Cys195.

The protein belongs to the carbon-nitrogen hydrolase superfamily. NIT1/NIT2 family.

This Schizosaccharomyces pombe (strain 972 / ATCC 24843) (Fission yeast) protein is Hydrolase C26A3.11.